A 351-amino-acid polypeptide reads, in one-letter code: Methylthioribose-1-phosphate isomerase (351 aa).

Substrate contacts are provided by residues 51-53 (RGA), arginine 94, and glutamine 199. The active-site Proton donor is the aspartate 240. 250–251 (NK) lines the substrate pocket.

The protein belongs to the EIF-2B alpha/beta/delta subunits family. MtnA subfamily. As to quaternary structure, homodimer.

It catalyses the reaction 5-(methylsulfanyl)-alpha-D-ribose 1-phosphate = 5-(methylsulfanyl)-D-ribulose 1-phosphate. It participates in amino-acid biosynthesis; L-methionine biosynthesis via salvage pathway; L-methionine from S-methyl-5-thio-alpha-D-ribose 1-phosphate: step 1/6. Functionally, catalyzes the interconversion of methylthioribose-1-phosphate (MTR-1-P) into methylthioribulose-1-phosphate (MTRu-1-P). This Bacillus thuringiensis subsp. konkukian (strain 97-27) protein is Methylthioribose-1-phosphate isomerase.